The chain runs to 293 residues: 4-hydroxy-tetrahydrodipicolinate synthase (293 aa).

Position 46 (T46) interacts with pyruvate. The active-site Proton donor/acceptor is the Y133. K161 serves as the catalytic Schiff-base intermediate with substrate. V202 is a pyruvate binding site.

It belongs to the DapA family. Homotetramer; dimer of dimers.

It is found in the cytoplasm. It catalyses the reaction L-aspartate 4-semialdehyde + pyruvate = (2S,4S)-4-hydroxy-2,3,4,5-tetrahydrodipicolinate + H2O + H(+). It participates in amino-acid biosynthesis; L-lysine biosynthesis via DAP pathway; (S)-tetrahydrodipicolinate from L-aspartate: step 3/4. Functionally, catalyzes the condensation of (S)-aspartate-beta-semialdehyde [(S)-ASA] and pyruvate to 4-hydroxy-tetrahydrodipicolinate (HTPA). This chain is 4-hydroxy-tetrahydrodipicolinate synthase, found in Wolbachia pipientis wMel.